The sequence spans 232 residues: Large ribosomal subunit protein uL1 (232 aa).

This sequence belongs to the universal ribosomal protein uL1 family. In terms of assembly, part of the 50S ribosomal subunit.

Its function is as follows. Binds directly to 23S rRNA. The L1 stalk is quite mobile in the ribosome, and is involved in E site tRNA release. Protein L1 is also a translational repressor protein, it controls the translation of the L11 operon by binding to its mRNA. This Amoebophilus asiaticus (strain 5a2) protein is Large ribosomal subunit protein uL1.